The following is a 365-amino-acid chain: Palmitoyltransferase ZDHHC20 (365 aa).

The Cytoplasmic portion of the chain corresponds to 1-14 (MAPCTLWRCCQRTV). The chain crosses the membrane as a helical span at residues 15-35 (GWVPVLFITFVVVWSYYAYVV). Residues 36-53 (ELCVFTLSGNGENGKAVV) lie on the Lumenal side of the membrane. The chain crosses the membrane as a helical span at residues 54–74 (YLVAFHLFFVMFVWSYWMTIF). At 75–169 (TSPASPSKEF…NNCVGFSNYK (95 aa)) the chain is on the cytoplasmic side. Positions 126 to 176 (RYCERCQLIKPDRAHHCSACDMCILKMDHHCPWVNNCVGFSNYKFFLLFLF) constitute a DHHC domain. C128 and C131 together coordinate Zn(2+). Residues K135 and 140–143 (HHCS) contribute to the substrate site. Positions 141, 142, 145, 148, and 155 each coordinate Zn(2+). C156 serves as the catalytic S-palmitoyl cysteine intermediate. Zn(2+) is bound at residue C162. The chain crosses the membrane as a helical span at residues 170–190 (FFLLFLFYSLLYCLFVATTVL). At 191-207 (QYFIKFWTNELTDTRAK) the chain is on the lumenal side. A helical transmembrane segment spans residues 208–231 (FHVLFLFFVSTMFFISVLSLLSYH). Residues 232–365 (CWLVGKNRTT…NNHVTVAIEN (134 aa)) lie on the Cytoplasmic side of the membrane. The interval 301–365 (PEQASVSNQS…NNHVTVAIEN (65 aa)) is disordered. Residues 302-321 (EQASVSNQSESARSIGSNQP) are compositionally biased toward polar residues. Phosphoserine occurs at positions 305 and 330.

This sequence belongs to the DHHC palmitoyltransferase family. Post-translationally, autopalmitoylated (in vitro).

It is found in the golgi apparatus membrane. The protein localises to the cell membrane. Its subcellular location is the cytoplasm. The protein resides in the perinuclear region. It localises to the endoplasmic reticulum membrane. It is found in the endoplasmic reticulum-Golgi intermediate compartment membrane. The catalysed reaction is L-cysteinyl-[protein] + hexadecanoyl-CoA = S-hexadecanoyl-L-cysteinyl-[protein] + CoA. The enzyme catalyses L-cysteinyl-[protein] + tetradecanoyl-CoA = S-tetradecanoyl-L-cysteinyl-[protein] + CoA. It carries out the reaction L-cysteinyl-[protein] + octadecanoyl-CoA = S-octadecanoyl-L-cysteinyl-[protein] + CoA. Functionally, palmitoyltransferase that could catalyze the addition of palmitate onto various protein substrates. Catalyzes palmitoylation of Cys residues in the cytoplasmic C-terminus of EGFR, and modulates the duration of EGFR signaling by modulating palmitoylation-dependent EGFR internalization and degradation. Has a preference for acyl-CoA with C16 fatty acid chains. Can also utilize acyl-CoA with C14 and C18 fatty acid chains. May palmitoylate CALHM1 subunit of gustatory voltage-gated ion channels and modulate channel gating and kinetics. In Bos taurus (Bovine), this protein is Palmitoyltransferase ZDHHC20.